The chain runs to 353 residues: Photosystem II protein D1 (353 aa).

Residue threonine 2 is modified to N-acetylthreonine. Threonine 2 carries the post-translational modification Phosphothreonine. A run of 3 helical transmembrane segments spans residues 29 to 46 (YIGWFGVLMIPTLLTATS), 118 to 133 (HFLLGVACYMGREWEL), and 142 to 156 (WIAVAYSAPVAAATA). Position 118 (histidine 118) interacts with chlorophyll a. Tyrosine 126 is a binding site for pheophytin a. [CaMn4O5] cluster is bound by residues aspartate 170 and glutamate 189. Residues 197–218 (FHMLGVAGVFGGSLFSAMHGSL) form a helical membrane-spanning segment. Histidine 198 provides a ligand contact to chlorophyll a. Residues histidine 215 and 264–265 (SF) contribute to the a quinone site. Histidine 215 is a binding site for Fe cation. A Fe cation-binding site is contributed by histidine 272. A helical membrane pass occupies residues 274-288 (FLAAWPVVGIWFTAL). Histidine 332, glutamate 333, aspartate 342, and alanine 344 together coordinate [CaMn4O5] cluster. Residues 345–353 (AIEAPSTNG) constitute a propeptide that is removed on maturation.

The protein belongs to the reaction center PufL/M/PsbA/D family. PSII is composed of 1 copy each of membrane proteins PsbA, PsbB, PsbC, PsbD, PsbE, PsbF, PsbH, PsbI, PsbJ, PsbK, PsbL, PsbM, PsbT, PsbX, PsbY, PsbZ, Psb30/Ycf12, at least 3 peripheral proteins of the oxygen-evolving complex and a large number of cofactors. It forms dimeric complexes. The D1/D2 heterodimer binds P680, chlorophylls that are the primary electron donor of PSII, and subsequent electron acceptors. It shares a non-heme iron and each subunit binds pheophytin, quinone, additional chlorophylls, carotenoids and lipids. D1 provides most of the ligands for the Mn4-Ca-O5 cluster of the oxygen-evolving complex (OEC). There is also a Cl(-1) ion associated with D1 and D2, which is required for oxygen evolution. The PSII complex binds additional chlorophylls, carotenoids and specific lipids. is required as a cofactor. Tyr-161 forms a radical intermediate that is referred to as redox-active TyrZ, YZ or Y-Z. In terms of processing, C-terminally processed by CTPA; processing is essential to allow assembly of the oxygen-evolving complex and thus photosynthetic growth.

It is found in the plastid. Its subcellular location is the chloroplast thylakoid membrane. It catalyses the reaction 2 a plastoquinone + 4 hnu + 2 H2O = 2 a plastoquinol + O2. Its function is as follows. Photosystem II (PSII) is a light-driven water:plastoquinone oxidoreductase that uses light energy to abstract electrons from H(2)O, generating O(2) and a proton gradient subsequently used for ATP formation. It consists of a core antenna complex that captures photons, and an electron transfer chain that converts photonic excitation into a charge separation. The D1/D2 (PsbA/PsbD) reaction center heterodimer binds P680, the primary electron donor of PSII as well as several subsequent electron acceptors. This chain is Photosystem II protein D1, found in Citrus sinensis (Sweet orange).